Here is a 488-residue protein sequence, read N- to C-terminus: Glutamyl-tRNA(Gln) amidotransferase subunit A (488 aa).

Active-site charge relay system residues include Lys77 and Ser152. Residue Ser176 is the Acyl-ester intermediate of the active site.

This sequence belongs to the amidase family. GatA subfamily. As to quaternary structure, heterotrimer of A, B and C subunits.

The catalysed reaction is L-glutamyl-tRNA(Gln) + L-glutamine + ATP + H2O = L-glutaminyl-tRNA(Gln) + L-glutamate + ADP + phosphate + H(+). Its function is as follows. Allows the formation of correctly charged Gln-tRNA(Gln) through the transamidation of misacylated Glu-tRNA(Gln) in organisms which lack glutaminyl-tRNA synthetase. The reaction takes place in the presence of glutamine and ATP through an activated gamma-phospho-Glu-tRNA(Gln). This chain is Glutamyl-tRNA(Gln) amidotransferase subunit A, found in Streptococcus pneumoniae serotype 19F (strain G54).